Here is a 781-residue protein sequence, read N- to C-terminus: Putative amine oxidase [copper-containing] (781 aa).

A signal peptide spans 1 to 34 (MSLPKTANGMDKLKLCYLLLFYLGSSSLTEVSGA). C199 and C203 are oxidised to a cystine. Residue 385 to 395 (FFDSSYMIGMN) participates in substrate binding. The Proton acceptor role is filled by D387. A disulfide bridge links C405 with C432. 472–477 (IANYDY) lines the substrate pocket. The active-site Schiff-base intermediate with substrate; via topaquinone is the Y475. Position 475 is a 2',4',5'-topaquinone (Y475). Positions 525 and 527 each coordinate Cu cation. Ca(2+)-binding residues include D534, D536, E579, F671, D674, E676, D682, and L683. Residues D534 and D536 each coordinate Mn(2+). D682 serves as a coordination point for Mn(2+). H693 lines the Cu cation pocket.

This sequence belongs to the copper/topaquinone oxidase family. As to quaternary structure, homodimer. Requires Cu cation as cofactor. It depends on Ca(2+) as a cofactor. L-topaquinone serves as cofactor. The cofactor is Mn(2+). Post-translationally, topaquinone (TPQ) is generated by copper-dependent autoxidation of a specific tyrosyl residue. In terms of tissue distribution, prismatic layer of shell (at protein level). Expressed primarily in the mantle with highest level in the mantle edge and lower level in the mantle pallium.

It is found in the secreted. The polypeptide is Putative amine oxidase [copper-containing] (Margaritifera margaritifera (Freshwater pearl mussel)).